The following is a 214-amino-acid chain: Ribosomal RNA small subunit methyltransferase G (214 aa).

S-adenosyl-L-methionine contacts are provided by residues G77, L82, 128 to 129, and R143; that span reads VE.

Belongs to the methyltransferase superfamily. RNA methyltransferase RsmG family.

The protein resides in the cytoplasm. The enzyme catalyses guanosine(527) in 16S rRNA + S-adenosyl-L-methionine = N(7)-methylguanosine(527) in 16S rRNA + S-adenosyl-L-homocysteine. Functionally, specifically methylates the N7 position of guanine in position 527 of 16S rRNA. The chain is Ribosomal RNA small subunit methyltransferase G from Nitrosococcus oceani (strain ATCC 19707 / BCRC 17464 / JCM 30415 / NCIMB 11848 / C-107).